A 240-amino-acid polypeptide reads, in one-letter code: 2,3,4,5-tetrahydropyridine-2,6-dicarboxylate N-acetyltransferase (240 aa).

Belongs to the transferase hexapeptide repeat family. DapH subfamily.

The enzyme catalyses (S)-2,3,4,5-tetrahydrodipicolinate + acetyl-CoA + H2O = L-2-acetamido-6-oxoheptanedioate + CoA. Its pathway is amino-acid biosynthesis; L-lysine biosynthesis via DAP pathway; LL-2,6-diaminopimelate from (S)-tetrahydrodipicolinate (acetylase route): step 1/3. Catalyzes the transfer of an acetyl group from acetyl-CoA to tetrahydrodipicolinate. This Staphylococcus epidermidis (strain ATCC 35984 / DSM 28319 / BCRC 17069 / CCUG 31568 / BM 3577 / RP62A) protein is 2,3,4,5-tetrahydropyridine-2,6-dicarboxylate N-acetyltransferase.